A 472-amino-acid polypeptide reads, in one-letter code: UDP-N-acetylmuramate--L-alanine ligase (472 aa).

119-125 (GTHGKTT) contacts ATP.

This sequence belongs to the MurCDEF family.

It is found in the cytoplasm. It catalyses the reaction UDP-N-acetyl-alpha-D-muramate + L-alanine + ATP = UDP-N-acetyl-alpha-D-muramoyl-L-alanine + ADP + phosphate + H(+). Its pathway is cell wall biogenesis; peptidoglycan biosynthesis. Functionally, cell wall formation. The sequence is that of UDP-N-acetylmuramate--L-alanine ligase from Caulobacter sp. (strain K31).